The sequence spans 594 residues: Adenine deaminase 1 (594 aa).

The protein belongs to the metallo-dependent hydrolases superfamily. Adenine deaminase family. The cofactor is Mn(2+).

It catalyses the reaction adenine + H2O + H(+) = hypoxanthine + NH4(+). This is Adenine deaminase 1 from Desulfotalea psychrophila (strain LSv54 / DSM 12343).